A 309-amino-acid polypeptide reads, in one-letter code: Golgi-associated RAB2 interactor protein 1A (309 aa).

Ser-231, Ser-263, and Ser-267 each carry phosphoserine.

This sequence belongs to the GARIN family. In terms of assembly, interacts (via N-terminus) with RAB2B (in GTP-bound form).

The protein resides in the golgi apparatus. Functionally, RAB2B effector protein required for accurate acrosome formation and normal male fertility. This chain is Golgi-associated RAB2 interactor protein 1A, found in Homo sapiens (Human).